The sequence spans 118 residues: Large ribosomal subunit protein bL19 (118 aa).

The protein belongs to the bacterial ribosomal protein bL19 family.

Its function is as follows. This protein is located at the 30S-50S ribosomal subunit interface and may play a role in the structure and function of the aminoacyl-tRNA binding site. The chain is Large ribosomal subunit protein bL19 from Citrifermentans bemidjiense (strain ATCC BAA-1014 / DSM 16622 / JCM 12645 / Bem) (Geobacter bemidjiensis).